An 89-amino-acid chain; its full sequence is Small ribosomal subunit protein uS14A (89 aa).

The protein belongs to the universal ribosomal protein uS14 family. In terms of assembly, part of the 30S ribosomal subunit. Contacts proteins S3 and S10.

Its function is as follows. Binds 16S rRNA, required for the assembly of 30S particles and may also be responsible for determining the conformation of the 16S rRNA at the A site. The sequence is that of Small ribosomal subunit protein uS14A from Levilactobacillus brevis (strain ATCC 367 / BCRC 12310 / CIP 105137 / JCM 1170 / LMG 11437 / NCIMB 947 / NCTC 947) (Lactobacillus brevis).